A 539-amino-acid chain; its full sequence is Cytochrome P450 monooxygenase tenB (539 aa).

Residues 13-33 traverse the membrane as a helical segment; it reads LGYYEKVAGVLGFLSIALLFW. Positions 439-460 are disordered; sequence PFRFSRASKDDDDDGKSTSSHA. C481 contributes to the heme binding site.

The protein belongs to the cytochrome P450 family. The cofactor is heme.

It is found in the membrane. It participates in secondary metabolite biosynthesis. In terms of biological role, cytochrome P450 monooxygenase; part of the gene cluster that mediates the biosynthesis of tenellin-type 2-pyridones, iron-chelating compounds involved in iron stress tolerance, competition with the natural competitor fungus Metarhizium robertsii and insect hosts infection. TenB catalyzes the selective N-hydroxylation of the 2-pyridone nitrogen of yield tellinin and 15-hydroxytellenin (15-HT), respectively. The pathway begins with the assembly of the polyketide-amino acid backbone by the hybrid PKS-NRPS tenS with the help of the enoyl reductase tenC. These enzymes catalyze the synthesis of the pyrrolidine-2-dione intermediates pretellinin A, 11-hydropretellenin A, 12-hydropretellenin A, 13-hydropretellenin A, 14-hydropretellenin A, 12-oxopretellenin A and prototellinin D. The cytochrome P450 monooxygenase tenA then catalyzes an oxidative ring expansion of pretenellin A and 14-hydropretellenin A to form the 2-pyridone core, leading to pretenellin B and pyridovericin, respectively. The cytochrome P450 monooxygenase tenB is then required for the selective N-hydroxylation of the 2-pyridone nitrogen of yield tellinin and 15-hydroxytellenin (15-HT), respectively. The UDP-glucosyltransferase GT1 and the methyltransferase MT1, located outside the tenS gene cluster, contribute to the stepwise glycosylation and methylation of 15-HT to obtain the glycoside pyridovericin-N-O-(4-O-methyl-beta-D-glucopyranoside) (PMGP). Additional related compounds such as 1-O-methyl-15-HT, (8Z)-1-O-methyl-15-HT, and O-methyltenellin A are also produced but the enzymes involved in their biosynthesis have still to be determined. The chain is Cytochrome P450 monooxygenase tenB from Beauveria bassiana (White muscardine disease fungus).